The chain runs to 217 residues: Elongation factor Ts (217 aa).

An involved in Mg(2+) ion dislocation from EF-Tu region spans residues threonine 82–valine 85.

This sequence belongs to the EF-Ts family.

The protein resides in the cytoplasm. In terms of biological role, associates with the EF-Tu.GDP complex and induces the exchange of GDP to GTP. It remains bound to the aminoacyl-tRNA.EF-Tu.GTP complex up to the GTP hydrolysis stage on the ribosome. The protein is Elongation factor Ts of Synechococcus sp. (strain RCC307).